An 816-amino-acid polypeptide reads, in one-letter code: Leucine--tRNA ligase (816 aa).

The 'HIGH' region signature appears at 42–52 (PYPSGSLHMGH). Positions 574–578 (KMSKS) match the 'KMSKS' region motif. Lys-577 contacts ATP.

It belongs to the class-I aminoacyl-tRNA synthetase family.

The protein resides in the cytoplasm. The catalysed reaction is tRNA(Leu) + L-leucine + ATP = L-leucyl-tRNA(Leu) + AMP + diphosphate. The protein is Leucine--tRNA ligase of Ruthia magnifica subsp. Calyptogena magnifica.